A 151-amino-acid polypeptide reads, in one-letter code: Chaperonin GroEL (151 aa).

An ATP-binding site is contributed by 41-45 (DGTTT).

The protein belongs to the chaperonin (HSP60) family. Forms a cylinder of 14 subunits composed of two heptameric rings stacked back-to-back. Interacts with the co-chaperonin GroES.

It localises to the cytoplasm. The enzyme catalyses ATP + H2O + a folded polypeptide = ADP + phosphate + an unfolded polypeptide.. Functionally, together with its co-chaperonin GroES, plays an essential role in assisting protein folding. The GroEL-GroES system forms a nano-cage that allows encapsulation of the non-native substrate proteins and provides a physical environment optimized to promote and accelerate protein folding. In Mycobacteroides chelonae (Mycobacterium chelonae), this protein is Chaperonin GroEL.